The primary structure comprises 147 residues: Hemoglobin subunit beta (147 aa).

The Globin domain maps to 3–147 (HWTAEEKQLI…VAHALARKYH (145 aa)). The heme b site is built by histidine 64 and histidine 93.

This sequence belongs to the globin family. In terms of assembly, heterotetramer of 2 alpha (or alpha-D) and 2 beta chains. In terms of tissue distribution, red blood cells.

In terms of biological role, involved in oxygen transport from the lung to the various peripheral tissues. The beta chain is a component of adult hemoglobin A and D. The sequence is that of Hemoglobin subunit beta (HBB) from Gallus gallus (Chicken).